Reading from the N-terminus, the 174-residue chain is NAD(P)H-quinone oxidoreductase subunit J (174 aa).

This sequence belongs to the complex I 30 kDa subunit family. As to quaternary structure, NDH-1 can be composed of about 15 different subunits; different subcomplexes with different compositions have been identified which probably have different functions.

It is found in the cellular thylakoid membrane. The enzyme catalyses a plastoquinone + NADH + (n+1) H(+)(in) = a plastoquinol + NAD(+) + n H(+)(out). It catalyses the reaction a plastoquinone + NADPH + (n+1) H(+)(in) = a plastoquinol + NADP(+) + n H(+)(out). Functionally, NDH-1 shuttles electrons from an unknown electron donor, via FMN and iron-sulfur (Fe-S) centers, to quinones in the respiratory and/or the photosynthetic chain. The immediate electron acceptor for the enzyme in this species is believed to be plastoquinone. Couples the redox reaction to proton translocation, and thus conserves the redox energy in a proton gradient. Cyanobacterial NDH-1 also plays a role in inorganic carbon-concentration. The chain is NAD(P)H-quinone oxidoreductase subunit J from Picosynechococcus sp. (strain ATCC 27264 / PCC 7002 / PR-6) (Agmenellum quadruplicatum).